Reading from the N-terminus, the 193-residue chain is RNA pyrophosphohydrolase (193 aa).

In terms of domain architecture, Nudix hydrolase spans 6-149 (GFRPNVGIIL…KRDVYQRALQ (144 aa)). The Nudix box signature appears at 38–59 (GGIKFGETPEQAMFRELEEEVG). The segment at 174-193 (THSARKTDEPSTEQTKPNNE) is disordered.

Belongs to the Nudix hydrolase family. RppH subfamily. The cofactor is a divalent metal cation.

Functionally, accelerates the degradation of transcripts by removing pyrophosphate from the 5'-end of triphosphorylated RNA, leading to a more labile monophosphorylated state that can stimulate subsequent ribonuclease cleavage. The protein is RNA pyrophosphohydrolase of Herminiimonas arsenicoxydans.